The primary structure comprises 288 residues: 4-diphosphocytidyl-2-C-methyl-D-erythritol kinase (288 aa).

Lys-11 is a catalytic residue. Position 95 to 105 (95 to 105 (PVAAGMAGGSS)) interacts with ATP. Asp-137 is a catalytic residue.

The protein belongs to the GHMP kinase family. IspE subfamily.

The catalysed reaction is 4-CDP-2-C-methyl-D-erythritol + ATP = 4-CDP-2-C-methyl-D-erythritol 2-phosphate + ADP + H(+). It functions in the pathway isoprenoid biosynthesis; isopentenyl diphosphate biosynthesis via DXP pathway; isopentenyl diphosphate from 1-deoxy-D-xylulose 5-phosphate: step 3/6. Its function is as follows. Catalyzes the phosphorylation of the position 2 hydroxy group of 4-diphosphocytidyl-2C-methyl-D-erythritol. The polypeptide is 4-diphosphocytidyl-2-C-methyl-D-erythritol kinase (Lachnospira eligens (strain ATCC 27750 / DSM 3376 / VPI C15-48 / C15-B4) (Eubacterium eligens)).